The sequence spans 239 residues: MATPHINAEMGDFADVVLMPGDPLRAKHIAETFLEDVREVNNVRGMLGFTGTYKGRKISVMGHGMGIPSCSIYTKELITDFGVKKIIRVGSCGAVRMDVKLRDVVIGMGACTDSKVNRIRFKDHDFAAIADFDMVRNAVDAAKALGVDARVGNLFSADLFYSPDGEMFDVMEKYGVLGVEMEAAGIYGVAAEFGAKALTICTVSDHIRTHEQTTAAERQTTFNDMIKIALESVLLGDKE.

His-5 is a binding site for a purine D-ribonucleoside. Phosphate contacts are provided by residues Gly-21, Arg-25, Arg-44, and 88 to 91; that span reads RVGS. Residues 180–182 and 204–205 contribute to the a purine D-ribonucleoside site; these read EME and SD. Asp-205 serves as the catalytic Proton donor.

It belongs to the PNP/UDP phosphorylase family. As to quaternary structure, homohexamer; trimer of homodimers.

It catalyses the reaction a purine D-ribonucleoside + phosphate = a purine nucleobase + alpha-D-ribose 1-phosphate. The enzyme catalyses a purine 2'-deoxy-D-ribonucleoside + phosphate = a purine nucleobase + 2-deoxy-alpha-D-ribose 1-phosphate. In terms of biological role, catalyzes the reversible phosphorolytic breakdown of the N-glycosidic bond in the beta-(deoxy)ribonucleoside molecules, with the formation of the corresponding free purine bases and pentose-1-phosphate. The sequence is that of Purine nucleoside phosphorylase DeoD-type from Salmonella agona (strain SL483).